We begin with the raw amino-acid sequence, 103 residues long: Small ribosomal subunit protein uS14c (103 aa).

The protein belongs to the universal ribosomal protein uS14 family. As to quaternary structure, part of the 30S ribosomal subunit.

The protein localises to the plastid. The protein resides in the chloroplast. Functionally, binds 16S rRNA, required for the assembly of 30S particles. The protein is Small ribosomal subunit protein uS14c of Lolium perenne (Perennial ryegrass).